The primary structure comprises 473 residues: FAD-dependent oxidoreductase dpasF (473 aa).

Positions methionine 1 to alanine 21 are cleaved as a signal peptide. N-linked (GlcNAc...) asparagine glycosylation is found at asparagine 26, asparagine 54, asparagine 92, asparagine 133, asparagine 185, asparagine 276, and asparagine 401.

It belongs to the beta-cyclopiazonate dehydrogenase family. FAD is required as a cofactor.

Its pathway is secondary metabolite biosynthesis; terpenoid biosynthesis. Functionally, FAD-dependent oxidoreductase; part of the gene cluster that mediates the biosynthesis of the diterpenoid pyrones subglutinols A and B. The first step of the pathway is the synthesis of the alpha-pyrone moiety by the polyketide synthase dpasA via condensation of one acetyl-CoA starter unit with 3 malonyl-CoA units and 2 methylations. The alpha-pyrone is then combined with geranylgeranyl pyrophosphate (GGPP) formed by the GGPP synthase dpasD through the action of the prenyltransferase dpasC to yield a linear alpha-pyrone diterpenoid. Subsequent steps in the diterpenoid pyrone biosynthetic pathway involve the decalin core formation, which is initiated by the epoxidation of the C10-C11 olefin by the FAD-dependent oxidoreductase dpasE, and is followed by a cyclization cascade catalyzed by the terpene cyclase dpasB. The FAD-linked oxidoreductase dpasF is then involved in tetrahydrofuran (THF) ring formation at the C5 unit to complete the formation of subglutinols A and B. DpasF possesses also an additional catalytic ability of multi-step oxidations to generate a new DDP analog with an enone system at the C5 named FDDP A. In Apiospora sacchari (Arthrinium sacchari), this protein is FAD-dependent oxidoreductase dpasF.